The following is a 274-amino-acid chain: Protein LIKE COV 3 (274 aa).

The Cytoplasmic segment spans residues 1–60 (METRERDLERLIPMHKSGASPRDVVLSVPPSPLASPIHVAGKEAIYKVIRSWASKKFMTG). The helical transmembrane segment at 61 to 81 (CVILLPIAVTFYFTWWFIHFV) threads the bilayer. At 82–93 (DGFFSPIYTHLG) the chain is on the extracellular side. The chain crosses the membrane as a helical span at residues 94–114 (INMFGLGFVTSITFIFMVGVF). Topologically, residues 115-274 (MSSWLGASVL…VCLSLVLAWT (160 aa)) are cytoplasmic.

It belongs to the plant COV1 protein family.

The protein localises to the membrane. This is Protein LIKE COV 3 from Arabidopsis thaliana (Mouse-ear cress).